Here is a 396-residue protein sequence, read N- to C-terminus: Argininosuccinate synthase (396 aa).

9 to 17 (AYSGGLDTS) serves as a coordination point for ATP. Tyr-85 contacts L-citrulline. Residue Gly-115 participates in ATP binding. Residues Thr-117, Asn-121, and Asp-122 each contribute to the L-aspartate site. Position 121 (Asn-121) interacts with L-citrulline. Residues Arg-125, Ser-173, Glu-258, and Tyr-270 each coordinate L-citrulline.

The protein belongs to the argininosuccinate synthase family. Type 1 subfamily. Homotetramer.

It localises to the cytoplasm. It catalyses the reaction L-citrulline + L-aspartate + ATP = 2-(N(omega)-L-arginino)succinate + AMP + diphosphate + H(+). The protein operates within amino-acid biosynthesis; L-arginine biosynthesis; L-arginine from L-ornithine and carbamoyl phosphate: step 2/3. In Streptococcus agalactiae serotype Ia (strain ATCC 27591 / A909 / CDC SS700), this protein is Argininosuccinate synthase.